A 115-amino-acid chain; its full sequence is MMSAKNMVKVMIVMFAIFLLAKSDGKPVRKRSVSEIQLMHNLGKHLNSVERVEWLRKKLQDVHNFIALGAPIFHRDGGSQRPRKKEDNVLIESHQKSLGEADKADVDVLSKTKSQ.

Positions 1-25 (MMSAKNMVKVMIVMFAIFLLAKSDG) are cleaved as a signal peptide. Positions 26–31 (KPVRKR) are excised as a propeptide. The segment at 51 to 69 (RVEWLRKKLQDVHNFIALG) is important for receptor binding. The interval 73 to 115 (FHRDGGSQRPRKKEDNVLIESHQKSLGEADKADVDVLSKTKSQ) is disordered.

This sequence belongs to the parathyroid hormone family. In terms of assembly, interacts with PTH1R (via N-terminal extracellular domain).

It localises to the secreted. Functionally, parathyroid hormone elevates calcium level by dissolving the salts in bone and preventing their renal excretion. Acts by binding to its receptor, PTH1R, activating G protein-coupled receptor signaling. Stimulates [1-14C]-2-deoxy-D-glucose (2DG) transport and glycogen synthesis in osteoblastic cells. The chain is Parathyroid hormone (PTH) from Equus caballus (Horse).